The primary structure comprises 243 residues: DNA repair protein RecO (243 aa).

The protein belongs to the RecO family.

In terms of biological role, involved in DNA repair and RecF pathway recombination. In Geobacter sulfurreducens (strain ATCC 51573 / DSM 12127 / PCA), this protein is DNA repair protein RecO.